Reading from the N-terminus, the 383-residue chain is uncharacterized protein (383 aa).

Positions 1-55 are disordered; it reads MSSKLTVNAHYSPLKDEDPLDHIDSQTALDSMETDSTGKSSLYFSKSDDPLSKDI. Basic and acidic residues predominate over residues 13 to 24; that stretch reads PLKDEDPLDHID. Residues 25–44 are compositionally biased toward polar residues; the sequence is SQTALDSMETDSTGKSSLYF. A compositionally biased stretch (basic and acidic residues) spans 46 to 55; sequence KSDDPLSKDI. 10 helical membrane-spanning segments follow: residues 87–107, 112–132, 157–177, 179–199, 205–225, 228–248, 262–282, 299–319, 329–349, and 352–372; these read LTIF…TILN, NIIN…SLMV, FIFV…FVPV, FYQI…FVLL, LFPF…VRFE, VAPI…IESV, LIYI…VASL, FFIV…ATFT, YMIS…AFLG, and LYGN…LYTL.

This sequence belongs to the TPT transporter family.

The protein localises to the membrane. This is an uncharacterized protein from Schizosaccharomyces pombe (strain 972 / ATCC 24843) (Fission yeast).